A 484-amino-acid chain; its full sequence is Malonate-semialdehyde dehydrogenase 3 (484 aa).

The NAD(+) site is built by F152, K176, E179, R180, and S229. The active-site Nucleophile is the C284. E384 lines the NAD(+) pocket.

This sequence belongs to the aldehyde dehydrogenase family. IolA subfamily. Homotetramer.

The enzyme catalyses 3-oxopropanoate + NAD(+) + CoA + H2O = hydrogencarbonate + acetyl-CoA + NADH + H(+). The catalysed reaction is 2-methyl-3-oxopropanoate + NAD(+) + CoA + H2O = propanoyl-CoA + hydrogencarbonate + NADH + H(+). The protein operates within polyol metabolism; myo-inositol degradation into acetyl-CoA; acetyl-CoA from myo-inositol: step 7/7. In terms of biological role, catalyzes the oxidation of malonate semialdehyde (MSA) and methylmalonate semialdehyde (MMSA) into acetyl-CoA and propanoyl-CoA, respectively. Is involved in a myo-inositol catabolic pathway. Bicarbonate, and not CO2, is the end-product of the enzymatic reaction. This chain is Malonate-semialdehyde dehydrogenase 3, found in Geobacillus kaustophilus (strain HTA426).